The following is a 53-amino-acid chain: Conotoxin Cal9.2e (53 aa).

Residues 1 to 6 (KKGVTQ) constitute a propeptide that is removed on maturation. 3 disulfides stabilise this stretch: cysteine 15-cysteine 32, cysteine 20-cysteine 42, and cysteine 22-cysteine 47.

Expressed by the venom duct.

The protein localises to the secreted. Its function is as follows. Probable neurotoxin with unknown target. Possibly targets ion channels. The sequence is that of Conotoxin Cal9.2e from Californiconus californicus (California cone).